Consider the following 390-residue polypeptide: Lipid-A-disaccharide synthase (390 aa).

It belongs to the LpxB family.

It catalyses the reaction a lipid X + a UDP-2-N,3-O-bis[(3R)-3-hydroxyacyl]-alpha-D-glucosamine = a lipid A disaccharide + UDP + H(+). Its pathway is bacterial outer membrane biogenesis; LPS lipid A biosynthesis. Functionally, condensation of UDP-2,3-diacylglucosamine and 2,3-diacylglucosamine-1-phosphate to form lipid A disaccharide, a precursor of lipid A, a phosphorylated glycolipid that anchors the lipopolysaccharide to the outer membrane of the cell. The sequence is that of Lipid-A-disaccharide synthase from Haemophilus influenzae (strain PittGG).